Here is an 811-residue protein sequence, read N- to C-terminus: Elongation factor G, mitochondrial (811 aa).

The N-terminal 64 residues, 1–64 (MSAIARAAAR…FQQSFQRRWA (64 aa)), are a transit peptide targeting the mitochondrion. Residues 96–394 (RRQRNVGISA…GVCAYLPNPS (299 aa)) form the tr-type G domain. GTP contacts are provided by residues 105 to 112 (AHIDSGKT), 192 to 196 (DTPGH), and 246 to 249 (NKMD).

The protein belongs to the TRAFAC class translation factor GTPase superfamily. Classic translation factor GTPase family. EF-G/EF-2 subfamily.

It is found in the mitochondrion. The protein operates within protein biosynthesis; polypeptide chain elongation. Mitochondrial GTPase that catalyzes the GTP-dependent ribosomal translocation step during translation elongation. During this step, the ribosome changes from the pre-translocational (PRE) to the post-translocational (POST) state as the newly formed A-site-bound peptidyl-tRNA and P-site-bound deacylated tRNA move to the P and E sites, respectively. Catalyzes the coordinated movement of the two tRNA molecules, the mRNA and conformational changes in the ribosome. This is Elongation factor G, mitochondrial from Cryptococcus neoformans var. neoformans serotype D (strain B-3501A) (Filobasidiella neoformans).